We begin with the raw amino-acid sequence, 515 residues long: UPF0053 protein BUsg_314 (515 aa).

A run of 7 helical transmembrane segments spans residues 14–34 (LTLV…VAIL), 49–69 (IGLG…SWVV), 79–99 (NFFS…FLLF), 125–145 (FWAV…DAII), 150–170 (MVNQ…LMLL), 185–205 (VVVL…AEAL), and 207–227 (FYIP…IEIF). CBS domains lie at 309–368 (MTPR…NIDV) and 372–432 (ASQI…DADE).

This sequence belongs to the UPF0053 family.

It is found in the cell membrane. This chain is UPF0053 protein BUsg_314, found in Buchnera aphidicola subsp. Schizaphis graminum (strain Sg).